We begin with the raw amino-acid sequence, 414 residues long: Eukaryotic initiation factor 4A-3 (414 aa).

The Q motif signature appears at 41–69; that stretch reads ESFDDMGLQENLLRGIYAYGFEKPSAIQQ. The region spanning 72–242 is the Helicase ATP-binding domain; it reads IVPFCKGLDV…RKFMNKPVRI (171 aa). An ATP-binding site is contributed by 85–92; it reads AQSGTGKT. The DEAD box motif lies at 190-193; sequence DEAD. In terms of domain architecture, Helicase C-terminal spans 253-414; that stretch reads GIKQFYVNVE…ELPANVADLL (162 aa).

Belongs to the DEAD box helicase family. eIF4A subfamily. In terms of assembly, eIF4F is a multi-subunit complex, the composition of which varies with external and internal environmental conditions. It is composed of at least EIF4A, EIF4E and EIF4G. Interacts with DRM2 (via UBA domains).

The protein resides in the cytoplasm. Its subcellular location is the nucleus. It carries out the reaction ATP + H2O = ADP + phosphate + H(+). ATP-dependent RNA helicase which is a subunit of the eIF4F complex involved in cap recognition and is required for mRNA binding to ribosome. In the current model of translation initiation, eIF4A unwinds RNA secondary structures in the 5'-UTR of mRNAs which is necessary to allow efficient binding of the small ribosomal subunit, and subsequent scanning for the initiator codon. This chain is Eukaryotic initiation factor 4A-3, found in Oryza sativa subsp. japonica (Rice).